Consider the following 315-residue polypeptide: MSLSRREFVKLCSAGVAGLGISQIYHPGIVHAMTEGAKKAPVIWVQGQGCTGCSVSLLNAVHPRIKEILLDVISLEFHPTVMASEGEMALAHMYEIAEKFNGNFFLLVEGAIPTAKEGRYCIVGETLDAKGHHHEVTMMELIRDLAPKSLATVAVGTCSAYGGIPAAEGNVTGSKSVRDFFADEKIEKLLVNVPGCPPHPDWMVGTLVAAWSHVLNPTEHPLPELDDDGRPLLFFGDNIHENCPYLDKYDNSEFAETFTKPGCKAELGCKGPSTYADCAKRRWNNGINWCVENAVCIGCVEPDFPDGKSPFYVAE.

A signal peptide (tat-type signal) is located at residues 1–32; sequence MSLSRREFVKLCSAGVAGLGISQIYHPGIVHA. Residues Cys-50, Cys-53, Cys-158, Cys-196, His-240, Cys-243, Cys-263, Cys-269, Cys-278, Cys-290, Cys-296, and Cys-299 each contribute to the [4Fe-4S] cluster site.

It belongs to the [NiFe]/[NiFeSe] hydrogenase small subunit family. In terms of assembly, heterodimer of a large and a small subunit. Requires [4Fe-4S] cluster as cofactor. Predicted to be exported by the Tat system. The position of the signal peptide cleavage has been experimentally proven.

The protein resides in the periplasm. It catalyses the reaction H2 + A = AH2. The protein is Periplasmic [NiFeSe] hydrogenase small subunit of Desulfomicrobium baculatum (Desulfovibrio baculatus).